The sequence spans 447 residues: Cysteine--tRNA ligase (447 aa).

Cys-28 contributes to the Zn(2+) binding site. Residues 30-40 (PTVYNYIHIGN) carry the 'HIGH' region motif. Zn(2+) contacts are provided by Cys-211, His-236, and Glu-240. A 'KMSKS' region motif is present at residues 268 to 272 (KMSKS). Residue Lys-271 coordinates ATP.

It belongs to the class-I aminoacyl-tRNA synthetase family. As to quaternary structure, monomer. It depends on Zn(2+) as a cofactor.

The protein localises to the cytoplasm. The enzyme catalyses tRNA(Cys) + L-cysteine + ATP = L-cysteinyl-tRNA(Cys) + AMP + diphosphate. This is Cysteine--tRNA ligase from Streptococcus pyogenes serotype M6 (strain ATCC BAA-946 / MGAS10394).